The sequence spans 269 residues: Tryptophan synthase alpha chain (269 aa).

Catalysis depends on proton acceptor residues Glu-49 and Asp-60.

This sequence belongs to the TrpA family. In terms of assembly, tetramer of two alpha and two beta chains.

It carries out the reaction (1S,2R)-1-C-(indol-3-yl)glycerol 3-phosphate + L-serine = D-glyceraldehyde 3-phosphate + L-tryptophan + H2O. Its pathway is amino-acid biosynthesis; L-tryptophan biosynthesis; L-tryptophan from chorismate: step 5/5. The alpha subunit is responsible for the aldol cleavage of indoleglycerol phosphate to indole and glyceraldehyde 3-phosphate. The chain is Tryptophan synthase alpha chain from Actinobacillus pleuropneumoniae serotype 7 (strain AP76).